The following is a 29-amino-acid chain: Ceratotoxin-B (29 aa).

In terms of assembly, homomer of four to six subunits.

It localises to the secreted. In terms of biological role, female-specific peptides with potent activity against Gram-positive and Gram-negative bacteria. They have as well hemolytic activity. This is Ceratotoxin-B (CTXB) from Ceratitis capitata (Mediterranean fruit fly).